The sequence spans 233 residues: Eukaryotic translation initiation factor 4E-1 (233 aa).

The interval 1 to 51 (MVVEDALKTSASEDQAKTETNPKPREEDDEPEEGEIVGDEESASKPSKGIA) is disordered. The segment covering 14–26 (DQAKTETNPKPRE) has biased composition (basic and acidic residues). Acidic residues predominate over residues 27 to 41 (EDDEPEEGEIVGDEE). EIF4G-binding regions lie at residues 55–58 (HALE) and 65–104 (FDSP…NNIR). Residues 76–81 (KQEDWG), K108, and 126–127 (WE) contribute to the mRNA site. Residues C131 and C169 are joined by a disulfide bond. The interval 152–161 (YTLLGMIGEQ) is EIF4G-binding. Residues 176–181 (RNRQEK) and 221–225 (MRHER) each bind mRNA.

Belongs to the eukaryotic initiation factor 4E family. In terms of assembly, EIF4F is a multi-subunit complex, the composition of which varies with external and internal environmental conditions. It is composed of at least EIF4A, EIF4E and EIF4G. EIF4E is also known to interact with other partners. In higher plants two isoforms of EIF4F have been identified, named isoform EIF4F and isoform EIF(iso)4F. Isoform EIF4F has subunits p220 and p26, whereas isoform EIF(iso)4F has subunits p82 and p28. As to quaternary structure, (Microbial infection) Does not interact with the VPg of Plum pox virus (PPV) strain D. Post-translationally, according to the redox status, the Cys-131-Cys-169 disulfide bridge may have a role in regulating protein function by affecting its ability to bind capped mRNA. In terms of tissue distribution, mostly expressed in leaves, flower buds, leaf buds and anthers, to a lower extent in roots, stems and green immature fruit, and, at low levels, in petals.

It is found in the nucleus. The protein resides in the cytoplasm. In terms of biological role, component of the protein complex eIF4F, which is involved in the recognition of the mRNA cap, ATP-dependent unwinding of 5'-terminal secondary structure and recruitment of mRNA to the ribosome. Recognizes and binds the 7-methylguanosine-containing mRNA cap during an early step in the initiation of protein synthesis and facilitates ribosome binding by inducing the unwinding of the mRNAs secondary structures. Functionally, (Microbial infection) Not involved in the plum pox virus (PPV) strain D infection process. This chain is Eukaryotic translation initiation factor 4E-1, found in Prunus domestica (Garden plum).